The primary structure comprises 389 residues: Probable serine/threonine-protein kinase PBL11 (389 aa).

A lipid anchor (N-myristoyl glycine) is attached at Gly2. Cys4 carries the S-palmitoyl cysteine lipid modification. One can recognise a Protein kinase domain in the interval 68–353; sequence FRPDSVVGEG…NEIVKTMEEL (286 aa). ATP is bound by residues 74 to 82 and Lys106; that span reads VGEGGFGCV. Tyr151 carries the phosphotyrosine modification. The active-site Proton acceptor is Asp203. 2 positions are modified to phosphoserine: Ser207 and Ser237. Phosphothreonine occurs at positions 238 and 243. Position 251 is a phosphotyrosine (Tyr251).

It belongs to the protein kinase superfamily. Ser/Thr protein kinase family. In terms of tissue distribution, roots, leaves and stems.

The protein localises to the cell membrane. The catalysed reaction is L-seryl-[protein] + ATP = O-phospho-L-seryl-[protein] + ADP + H(+). It carries out the reaction L-threonyl-[protein] + ATP = O-phospho-L-threonyl-[protein] + ADP + H(+). Its function is as follows. May play a role in the regulation of plant growth and development. May be involved in plant defense signaling. The sequence is that of Probable serine/threonine-protein kinase PBL11 from Arabidopsis thaliana (Mouse-ear cress).